A 264-amino-acid polypeptide reads, in one-letter code: tRNA (guanine-N(1)-)-methyltransferase (264 aa).

S-adenosyl-L-methionine-binding positions include glycine 125 and leucine 145 to leucine 150.

The protein belongs to the RNA methyltransferase TrmD family. In terms of assembly, homodimer.

The protein localises to the cytoplasm. It carries out the reaction guanosine(37) in tRNA + S-adenosyl-L-methionine = N(1)-methylguanosine(37) in tRNA + S-adenosyl-L-homocysteine + H(+). Functionally, specifically methylates guanosine-37 in various tRNAs. The polypeptide is tRNA (guanine-N(1)-)-methyltransferase (Burkholderia ambifaria (strain ATCC BAA-244 / DSM 16087 / CCUG 44356 / LMG 19182 / AMMD) (Burkholderia cepacia (strain AMMD))).